The following is a 252-amino-acid chain: Chitooligosaccharide deacetylase (252 aa).

Mg(2+) is bound by residues His-61 and His-125.

The protein belongs to the YdjC deacetylase family. ChbG subfamily. In terms of assembly, homodimer. It depends on Mg(2+) as a cofactor.

It is found in the cytoplasm. The catalysed reaction is N,N'-diacetylchitobiose + H2O = N-acetyl-beta-D-glucosaminyl-(1-&gt;4)-D-glucosamine + acetate. It catalyses the reaction diacetylchitobiose-6'-phosphate + H2O = N'-monoacetylchitobiose-6'-phosphate + acetate. The protein operates within glycan degradation; chitin degradation. Functionally, involved in the degradation of chitin. ChbG is essential for growth on the acetylated chitooligosaccharides chitobiose and chitotriose but is dispensable for growth on cellobiose and chitosan dimer, the deacetylated form of chitobiose. Deacetylation of chitobiose-6-P and chitotriose-6-P is necessary for both the activation of the chb promoter by the regulatory protein ChbR and the hydrolysis of phosphorylated beta-glucosides by the phospho-beta-glucosidase ChbF. Catalyzes the removal of only one acetyl group from chitobiose-6-P to yield monoacetylchitobiose-6-P, the inducer of ChbR and the substrate of ChbF. The protein is Chitooligosaccharide deacetylase of Salmonella dublin (strain CT_02021853).